An 818-amino-acid chain; its full sequence is Protein LDB19 (818 aa).

The interval 1–25 is disordered; it reads MAFSRLTSTHQSNHNGYSNSNKKGQ. Thr-93 carries the phosphothreonine modification. The span at 352 to 361 shows a compositional bias: basic and acidic residues; sequence QVKIKESEKS. The disordered stretch occupies residues 352-374; sequence QVKIKESEKSKKPRSHIKRYGEL. Phosphoserine is present on Ser-384. Residues 388–436 form a disordered region; the sequence is MPSQRLPGEPGREQAPNSSGPASTGNVGLDDENPVNEDEEDQPGSEFIH. Residues 402–413 show a composition bias toward polar residues; it reads APNSSGPASTGN. Acidic residues predominate over residues 416 to 430; sequence LDDENPVNEDEEDQP. A Glycyl lysine isopeptide (Lys-Gly) (interchain with G-Cter in ubiquitin) cross-link involves residue Lys-486. Disordered stretches follow at residues 568–590 and 607–644; these read QPIR…NVHN and TPKV…NSNI. A Phosphothreonine modification is found at Thr-619. Polar residues predominate over residues 620-629; it reads PVNSNKSNHS. Position 808 is a phosphoserine (Ser-808).

This sequence belongs to the LDB19 family.

The protein resides in the cytoplasm. It is found in the golgi apparatus. Functionally, may be involved in protein-linked oligosaccharide phosphorylation since the deletion reduces the negative charge of the cell surface. Involved in the resistance to EDTA, cadmium chloride, cycloheximide, 6-dimethylaminopurine, methyl caffeate, beta-chloro-L-alanine, caffeine and cerulenin. The protein is Protein LDB19 (LDB19) of Saccharomyces cerevisiae (strain ATCC 204508 / S288c) (Baker's yeast).